The chain runs to 384 residues: Succinyl-diaminopimelate desuccinylase (384 aa).

Histidine 71 provides a ligand contact to Zn(2+). Aspartate 73 is an active-site residue. Aspartate 104 lines the Zn(2+) pocket. Glutamate 138 acts as the Proton acceptor in catalysis. Glutamate 139, glutamate 167, and histidine 357 together coordinate Zn(2+).

The protein belongs to the peptidase M20A family. DapE subfamily. As to quaternary structure, homodimer. It depends on Zn(2+) as a cofactor. Requires Co(2+) as cofactor.

The catalysed reaction is N-succinyl-(2S,6S)-2,6-diaminopimelate + H2O = (2S,6S)-2,6-diaminopimelate + succinate. It participates in amino-acid biosynthesis; L-lysine biosynthesis via DAP pathway; LL-2,6-diaminopimelate from (S)-tetrahydrodipicolinate (succinylase route): step 3/3. In terms of biological role, catalyzes the hydrolysis of N-succinyl-L,L-diaminopimelic acid (SDAP), forming succinate and LL-2,6-diaminopimelate (DAP), an intermediate involved in the bacterial biosynthesis of lysine and meso-diaminopimelic acid, an essential component of bacterial cell walls. This chain is Succinyl-diaminopimelate desuccinylase, found in Blochmanniella floridana.